Reading from the N-terminus, the 318-residue chain is Probable aminopeptidase YbaC (318 aa).

S115 functions as the Nucleophile in the catalytic mechanism. D266 is a catalytic residue. H296 (proton donor) is an active-site residue.

It belongs to the peptidase S33 family.

Functionally, probable aminopeptidase. The chain is Probable aminopeptidase YbaC (ybaC) from Bacillus subtilis (strain 168).